Reading from the N-terminus, the 391-residue chain is Pyruvate dehydrogenase E1 component subunit alpha type II, mitochondrial (391 aa).

A mitochondrion-targeting transit peptide spans 1–17; the sequence is SNIFKGPTVGSSVVAMS. H83, Y109, R110, G148, G156, V158, D187, G188, A189, N216, and Y218 together coordinate pyruvate. Thiamine diphosphate-binding residues include Y109 and R110. The thiamine diphosphate site is built by G156, V158, D187, G188, A189, and N216. D187 is a Mg(2+) binding site. Positions 216 and 218 each coordinate Mg(2+). H283 is a binding site for thiamine diphosphate. A phosphoserine mark is found at S284 and S291.

As to quaternary structure, heterotetramer of two PDHA2 and two PDHB subunits. The heterotetramer interacts with DLAT, and is part of the multimeric pyruvate dehydrogenase complex that contains multiple copies of pyruvate dehydrogenase (E1), dihydrolipoamide acetyltransferase (DLAT, E2) and lipoamide dehydrogenase (DLD, E3). Requires thiamine diphosphate as cofactor. Mg(2+) is required as a cofactor.

Its subcellular location is the mitochondrion matrix. It catalyses the reaction N(6)-[(R)-lipoyl]-L-lysyl-[protein] + pyruvate + H(+) = N(6)-[(R)-S(8)-acetyldihydrolipoyl]-L-lysyl-[protein] + CO2. Its activity is regulated as follows. Pyruvate dehydrogenase activity is inhibited by phosphorylation of PDHA2; it is reactivated by dephosphorylation. In terms of biological role, the pyruvate dehydrogenase complex catalyzes the overall conversion of pyruvate to acetyl-CoA and CO(2), and thereby links the glycolytic pathway to the tricarboxylic cycle. The chain is Pyruvate dehydrogenase E1 component subunit alpha type II, mitochondrial from Ascaris suum (Pig roundworm).